A 583-amino-acid polypeptide reads, in one-letter code: Threonine--tRNA ligase (583 aa).

The interval 185-478 (DHRKLGRELD…LVEHYGGAFP (294 aa)) is catalytic. Residues C278, H329, and H455 each contribute to the Zn(2+) site.

Belongs to the class-II aminoacyl-tRNA synthetase family. As to quaternary structure, homodimer. Zn(2+) is required as a cofactor.

Its subcellular location is the cytoplasm. It carries out the reaction tRNA(Thr) + L-threonine + ATP = L-threonyl-tRNA(Thr) + AMP + diphosphate + H(+). In terms of biological role, catalyzes the attachment of threonine to tRNA(Thr) in a two-step reaction: L-threonine is first activated by ATP to form Thr-AMP and then transferred to the acceptor end of tRNA(Thr). Also edits incorrectly charged L-seryl-tRNA(Thr). The chain is Threonine--tRNA ligase from Borrelia hermsii (strain HS1 / DAH).